Consider the following 384-residue polypeptide: Galactokinase (384 aa).

Position 34-37 (34-37) interacts with substrate; that stretch reads EHTD. 123–129 contributes to the ATP binding site; it reads SSGLSSS. Mg(2+)-binding residues include S129 and E161. D173 acts as the Proton acceptor in catalysis. Y222 contributes to the substrate binding site.

This sequence belongs to the GHMP kinase family. GalK subfamily.

The protein localises to the cytoplasm. It carries out the reaction alpha-D-galactose + ATP = alpha-D-galactose 1-phosphate + ADP + H(+). It participates in carbohydrate metabolism; galactose metabolism. Catalyzes the transfer of the gamma-phosphate of ATP to D-galactose to form alpha-D-galactose-1-phosphate (Gal-1-P). This Actinobacillus pleuropneumoniae serotype 3 (strain JL03) protein is Galactokinase.